The primary structure comprises 514 residues: ATP synthase subunit alpha 2 (514 aa).

Position 170-177 (170-177) interacts with ATP; the sequence is GDRQTGKT.

It belongs to the ATPase alpha/beta chains family. F-type ATPases have 2 components, CF(1) - the catalytic core - and CF(0) - the membrane proton channel. CF(1) has five subunits: alpha(3), beta(3), gamma(1), delta(1), epsilon(1). CF(0) has three main subunits: a(1), b(2) and c(9-12). The alpha and beta chains form an alternating ring which encloses part of the gamma chain. CF(1) is attached to CF(0) by a central stalk formed by the gamma and epsilon chains, while a peripheral stalk is formed by the delta and b chains.

It localises to the cell inner membrane. The catalysed reaction is ATP + H2O + 4 H(+)(in) = ADP + phosphate + 5 H(+)(out). Functionally, produces ATP from ADP in the presence of a proton gradient across the membrane. The alpha chain is a regulatory subunit. The chain is ATP synthase subunit alpha 2 from Hahella chejuensis (strain KCTC 2396).